Here is a 399-residue protein sequence, read N- to C-terminus: Argonaute-binding protein 1 (399 aa).

As to quaternary structure, component of the argonaute siRNA chaperone (ARC) complex composed of ago1, arb1 and arb2. Interacts with ago1.

The protein localises to the nucleus. Its subcellular location is the cytoplasm. Its function is as follows. Component of the argonaute siRNA chaperone (ARC) complex which is required for histone H3K9 methylation, heterochromatin assembly and siRNA generation. The ARC complex contains mostly double-stranded siRNA. Inhibits the release of the siRNA passenger strand from ago1 together with arb2. Inhibits the slicer activity of ago1. Required for swi6 localization to the centromeric repeats. This is Argonaute-binding protein 1 (arb1) from Schizosaccharomyces pombe (strain 972 / ATCC 24843) (Fission yeast).